Consider the following 135-residue polypeptide: Malate dehydrogenase (135 aa).

Residues 7 to 12 and aspartate 25 each bind NAD(+); that span reads XAAGGI. Residues arginine 72 and arginine 78 each contribute to the substrate site. Residues asparagine 85 and 108 to 110 contribute to the NAD(+) site; that span reads ITN. Asparagine 110 provides a ligand contact to substrate.

The protein belongs to the LDH/MDH superfamily. MDH type 1 family. In terms of assembly, homodimer.

The catalysed reaction is (S)-malate + NAD(+) = oxaloacetate + NADH + H(+). In terms of biological role, catalyzes the reversible oxidation of malate to oxaloacetate. The chain is Malate dehydrogenase (mdh) from Klebsiella pneumoniae.